A 273-amino-acid polypeptide reads, in one-letter code: UPF0380 protein YubP (273 aa).

This sequence belongs to the UPF0380 family.

The sequence is that of UPF0380 protein YubP (yubP) from Escherichia coli (strain K12).